Reading from the N-terminus, the 2715-residue chain is MAAAAGGGSCPGPGSARGRFPGRPRGAGGGGGRGGRGNGAERVRVALRRGGGATGPGGAEPGEDTALLRLLGLRRGLRRLRRLWAGPRVQRGRGRGRGRGWGPSRGCVPEEESSDGESDEEEFQGFHSDEDVAPSSLRSALRSQRGRAPRGRGRKHKTTPLPPPRLADVAPTPPKTPARKRGEEGTERMVQALTELLRRAQAPQAPRSRACEPSTPRRSRGRPPGRPAGPCRRKQQAVVVAEAAVTIPKPEPPPPVVPVKHQTGSWKCKEGPGPGPGTPRRGGQSSRGGRGGRGRGRGGGLPFVIKFVSRAKKVKMGQLSLGLESGQGQGQHEESWQDVPQRRVGSGQGGSPCWKKQEQKLDDEEEEKKEEEEKDKEGEEKEERAVAEEMMPAAEKEEAKLPPPPLTPPAPSPPPPLPPPSTSPPPPLCPPPPPPVSPPPLPSPPPPPAQEEQEESPPPVVPATCSRKRGRPPLTPSQRAEREAARAGPEGTSPPTPTPSTATGGPPEDSPTVAPKSTTFLKNIRQFIMPVVSARSSRVIKTPRRFMDEDPPKPPKVEVSPVLRPPITTSPPVPQEPAPVPSPPRAPTPPSTPVPLPEKRRSILREPTFRWTSLTRELPPPPPAPPPPPAPSPPPAPATSSRRPLLLRAPQFTPSEAHLKIYESVLTPPPLGAPEAPEPEPPPADDSPAEPEPRAVGRTNHLSLPRFAPVVTTPVKAEVSPHGAPALSNGPQTQAQLLQPLQALQTQLLPQALPPPQPQLQPPPSPQQMPPLEKARIAGVGSLPLSGVEEKMFSLLKRAKVQLFKIDQQQQQKVAASMPLSPGGQMEEVAGAVKQISDRGPVRSEDESVEAKRERPSGPESPVQGPRIKHVCRHAAVALGQARAMVPEDVPRLSALPLRDRQDLATEDTSSASETESVPSRSRRGKVEAAGPGGESEPTGSGGTLAHTPRRSLPSHHGKKMRMARCGHCRGCLRVQDCGSCVNCLDKPKFGGPNTKKQCCVYRKCDKIEARKMERLAKKGRTIVKTLLPWDSDESPEASPGPPGPRRGAGAGGPREEVVAHPGPEEQDSLLQRKSARRCVKQRPSYDIFEDSDDSEPGGPPAPRRRTPRENELPLPEPEEQSRPRKPTLQPVLQLKARRRLDKDALAPGPFASFPNGWTGKQKSPDGVHRVRVDFKEDCDLENVWLMGGLSVLTSVPGGPPMVCLLCASKGLHELVFCQVCCDPFHPFCLEEAERPLPQHHDTWCCRRCKFCHVCGRKGRGSKHLLECERCRHAYHPACLGPSYPTRATRKRRHWICSACVRCKSCGATPGKNWDVEWSGDYSLCPRCTQLYEKGNYCPICTRCYEDNDYESKMMQCAQCDHWVHAKCEGLSDEDYEILSGLPDSVLYTCGPCAGAAQPRWREALSGALQGGLRQVLQGLLSSKVVGPLLLCTQCGPDGKQLHPGPCGLQAVSQRFEDGHYKSVHSFMEDMVGILMRHSEEGETPDRRAGGQMKGLLLKLLESAFGWFDAHDPKYWRRSTRLPNGVLPNAVLPPSLDHVYAQWRQQEPETPESGQPPGDPSAAFQGKDPAAFSHLEDPRQCALCLKYGDADSKEAGRLLYIGQNEWTHVNCAIWSAEVFEENDGSLKNVHAAVARGRQMRCELCLKPGATVGCCLSSCLSNFHFMCARASYCIFQDDKKVFCQKHTDLLDGKEIVNPDGFDVLRRVYVDFEGINFKRKFLTGLEPDAINVLIGSIRIDSLGTLSDLSDCEGRLFPIGYQCSRLYWSTVDARRRCWYRCRILEYRPWGPREEPAHLEAAEENQTIVHSPAPSSEPPGGEDPPLDTDVLVPGAPERHSPIQNLDPPLRPDSGSAPPPAPRSFSGARIKVPNYSPSRRPLGGVSFGPLPSPGSPSSLTHHIPTVGDPDFPAPPRRSRRPSPLAPRPPPSRWASPPLKTSPQLRVPPPTSVVTALTPTSGELAPPGPAPSPPPPEDLGPDFEDMEVVSGLSAADLDFAASLLGTEPFQEEIVAAGAMGSSHGGPGDSSEEESSPTSRYIHFPVTVVSAPGLAPSATPGAPRIEQLDGVDDGTDSEAEAVQQPRGQGTPPSGPGVVRAGVLGAAGDRARPPEDLPSEIVDFVLKNLGGPGDGGAGPREESLPPAPPLANGSQPSQGLTASPADPTRTFAWLPGAPGVRVLSLGPAPEPPKPATSKIILVNKLGQVFVKMAGEGEPVPPPVKQPPLPPTISPTAPTSWTLPPGPLLGVLPVVGVVRPAPPPPPPPLTLVLSSGPASPPRQAIRVKRVSTFSGRSPPAPPPYKAPRLDEDGEASEDTPQVPGLGSGGFSRVRMKTPTVRGVLDLDRPGEPAGEESPGPLQERSPLLPLPEDGPPQVPDGPPDLLLESQWHHYSGEASSSEEEPPSPDDKENQAPKRTGPHLRFEISSEDGFSVEAESLEGAWRTLIEKVQEARGHARLRHLSFSGMSGARLLGIHHDAVIFLAEQLPGAQRCQHYKFRYHQQGEGQEEPPLNPHGAARAEVYLRKCTFDMFNFLASQHRVLPEGATCDEEEDEVQLRSTRRATSLELPMAMRFRHLKKTSKEAVGVYRSAIHGRGLFCKRNIDAGEMVIEYSGIVIRSVLTDKREKFYDGKGIGCYMFRMDDFDVVDATMHGNAARFINHSCEPNCFSRVIHVEGQKHIVIFALRRILRGEELTYDYKFPIEDASNKLPCNCGAKRCRRFLN.

The span at 1-11 (MAAAAGGGSCP) shows a compositional bias: gly residues. Disordered stretches follow at residues 1–65 (MAAA…GEDT), 81–302 (RRLW…GGLP), 320–518 (SLGL…PKST), and 532–771 (VSAR…QMPP). N-acetylalanine is present on Ala2. Positions 12–24 (GPGSARGRFPGRP) are enriched in low complexity. Residues 17 to 36 (RGRFPGRPRGAGGGGGRGGR) carry the Menin-binding motif (MBM) motif. Gly residues-rich tracts occupy residues 25-38 (RGAG…GRGN) and 49-60 (RGGGATGPGGAE). A DNA-binding region (a.T hook 1) is located at residues 37–44 (GNGAERVR). The span at 109–123 (PEEESSDGESDEEEF) shows a compositional bias: acidic residues. Positions 110 to 117 (EEESSDGE) form a DNA-binding region, a.T hook 2. Ser113, Ser114, and Ser118 each carry phosphoserine. A compositionally biased stretch (basic residues) spans 144 to 158 (QRGRAPRGRGRKHKT). Residues 160–176 (PLPPPRLADVAPTPPKT) are compositionally biased toward pro residues. A compositionally biased stretch (low complexity) spans 199–208 (RAQAPQAPRS). A Phosphoserine modification is found at Ser351. The a.T hook 3 DNA-binding region spans 357–365 (QEQKLDDEE). Residues 361–374 (LDDEEEEKKEEEEK) are compositionally biased toward acidic residues. Residues 375-387 (DKEGEEKEERAVA) show a composition bias toward basic and acidic residues. Residues 401-449 (LPPPPLTPPAPSPPPPLPPPSTSPPPPLCPPPPPPVSPPPLPSPPPPPA) show a composition bias toward pro residues. Residues 545–556 (RFMDEDPPKPPK) show a composition bias toward basic and acidic residues. A compositionally biased stretch (pro residues) spans 568-596 (TTSPPVPQEPAPVPSPPRAPTPPSTPVPL). Residues 597-608 (PEKRRSILREPT) show a composition bias toward basic and acidic residues. The span at 618–637 (LPPPPPAPPPPPAPSPPPAP) shows a compositional bias: pro residues. Over residues 731-751 (PQTQAQLLQPLQALQTQLLPQ) the composition is skewed to low complexity. Positions 752–769 (ALPPPQPQLQPPPSPQQM) are enriched in pro residues. Lys805 is covalently cross-linked (Glycyl lysine isopeptide (Lys-Gly) (interchain with G-Cter in SUMO2)). Disordered regions lie at residues 819–868 (PLSP…GPRI) and 894–959 (SALP…HHGK). Phosphoserine occurs at positions 821, 844, and 861. A compositionally biased stretch (basic and acidic residues) spans 836-857 (ISDRGPVRSEDESVEAKRERPS). The span at 907–917 (EDTSSASETES) shows a compositional bias: low complexity. At Ser936 the chain carries Phosphoserine. Basic residues predominate over residues 948–959 (TPRRSLPSHHGK). The segment at 959-1006 (KKMRMARCGHCRGCLRVQDCGSCVNCLDKPKFGGPNTKKQCCVYRKCD) adopts a CXXC-type zinc-finger fold. Cys966, Cys969, Cys972, Cys978, Cys981, Cys984, Cys1000, and Cys1005 together coordinate Zn(2+). Positions 1027-1132 (LLPWDSDESP…RPRKPTLQPV (106 aa)) are disordered. 4 positions are modified to phosphoserine: Ser1032, Ser1035, Ser1092, and Ser1095. Lys1136 participates in a covalent cross-link: Glycyl lysine isopeptide (Lys-Gly) (interchain with G-Cter in SUMO2). Residues 1146 to 1166 (LAPGPFASFPNGWTGKQKSPD) are disordered. PHD-type zinc fingers lie at residues 1201–1252 (PMVC…CKFC), 1249–1303 (CKFC…CVRC), and 1335–1396 (GNYC…CAGA). Positions 1404-1504 (ALSGALQGGL…GLLLKLLESA (101 aa)) constitute a Bromo domain. Residues 1545 to 1567 (QQEPETPESGQPPGDPSAAFQGK) are disordered. The C2HC pre-PHD-type zinc finger occupies 1578–1618 (PRQCALCLKYGDADSKEAGRLLYIGQNEWTHVNCAIWSAEV). The PHD-type 4 zinc finger occupies 1639 to 1686 (MRCELCLKPGATVGCCLSSCLSNFHFMCARASYCIFQDDKKVFCQKHT). The region spanning 1727-1783 (AINVLIGSIRIDSLGTLSDLSDCEGRLFPIGYQCSRLYWSTVDARRRCWYRCRILEY) is the FYR N-terminal domain. Disordered stretches follow at residues 1806 to 1978 (HSPA…PDFE), 2008 to 2093 (VAAG…VVRA), 2118 to 2162 (LKNL…PTRT), and 2280 to 2412 (RVST…RTGP). Residues 1876–1894 (PLGGVSFGPLPSPGSPSSL) show a composition bias toward low complexity. Ser1930 and Ser1936 each carry phosphoserine. A compositionally biased stretch (pro residues) spans 1960 to 1972 (PPGPAPSPPPPED). The span at 2062 to 2072 (DGVDDGTDSEA) shows a compositional bias: acidic residues. Residues Thr2068 and Thr2083 each carry the phosphothreonine modification. A compositionally biased stretch (polar residues) spans 2144–2153 (NGSQPSQGLT). A phosphoserine mark is found at Ser2288 and Ser2348. Residues 2342–2351 (EPAGEESPGP) are compositionally biased toward low complexity. Residues 2359–2373 (LPLPEDGPPQVPDGP) show a composition bias toward pro residues. The 82-residue stretch at 2411–2492 (GPHLRFEISS…QRCQHYKFRY (82 aa)) folds into the FYR C-terminal domain. The short motif at 2508–2513 (GAARAE) is the WDR5 interaction motif (WIN) element. The region spanning 2575 to 2691 (EAVGVYRSAI…RGEELTYDYK (117 aa)) is the SET domain. S-adenosyl-L-methionine contacts are provided by residues His2585, Arg2587, Tyr2629, and 2652-2653 (NH). Zn(2+)-binding residues include Cys2655 and Cys2703. Residues 2699-2715 (NKLPCNCGAKRCRRFLN) form the Post-SET domain. Asn2704 is an S-adenosyl-L-methionine binding site. 2 residues coordinate Zn(2+): Cys2705 and Cys2710.

The protein belongs to the class V-like SAM-binding methyltransferase superfamily. Histone-lysine methyltransferase family. TRX/MLL subfamily. Component of the menin-associated histone methyltransferase complex, at least composed of KMT2B/MLL4, ASH2L, RBBP5, WDR5, DPY30, MEN1; the complex interacts with POLR2A and POLR2B via MEN1. Interacts with NFE2. Interacts with KDM6B. Interacts (via WIN motif) with WDR5. Interacts (via MBM motif) with MEN1. Forms a core complex with the evolutionary conserved subcomplex WRAD composed of WDR5, RBBP5, ASH2L/ASH2 and DPY30 subunits; WRAD differentially stimulates the methyltransferase activity. As to expression, widely expressed. Highest levels in testis. Also found in brain with higher expression in the cerebellum than in any other region, bone marrow, heart, muscle, kidney, placenta, spleen, thymus, prostate, ovary, intestine, colon, peripheral blood lymphocytes and pancreas. Often amplified in pancreatic carcinomas.

The protein localises to the nucleus. It carries out the reaction L-lysyl(4)-[histone H3] + S-adenosyl-L-methionine = N(6)-methyl-L-lysyl(4)-[histone H3] + S-adenosyl-L-homocysteine + H(+). It catalyses the reaction N(6)-methyl-L-lysyl(4)-[histone H3] + S-adenosyl-L-methionine = N(6),N(6)-dimethyl-L-lysyl(4)-[histone H3] + S-adenosyl-L-homocysteine + H(+). In terms of biological role, histone methyltransferase that catalyzes methyl group transfer from S-adenosyl-L-methionine to the epsilon-amino group of 'Lys-4' of histone H3 (H3K4) via a non-processive mechanism. Part of chromatin remodeling machinery predominantly forms H3K4me1 and H3K4me2 methylation marks at active chromatin sites where transcription and DNA repair take place. Likely plays a redundant role with KMT2C in enriching H3K4me1 marks on primed and active enhancer elements. Plays a central role in beta-globin locus transcription regulation by being recruited by NFE2. Plays an important role in controlling bulk H3K4me during oocyte growth and preimplantation development. Required during the transcriptionally active period of oocyte growth for the establishment and/or maintenance of bulk H3K4 trimethylation (H3K4me3), global transcriptional silencing that preceeds resumption of meiosis, oocyte survival and normal zygotic genome activation. This Homo sapiens (Human) protein is Histone-lysine N-methyltransferase 2B (KMT2B).